We begin with the raw amino-acid sequence, 159 residues long: Endoribonuclease YbeY (159 aa).

Zn(2+) is bound by residues His-117, His-121, and His-127.

The protein belongs to the endoribonuclease YbeY family. Zn(2+) is required as a cofactor.

It is found in the cytoplasm. Functionally, single strand-specific metallo-endoribonuclease involved in late-stage 70S ribosome quality control and in maturation of the 3' terminus of the 16S rRNA. The chain is Endoribonuclease YbeY from Azorhizobium caulinodans (strain ATCC 43989 / DSM 5975 / JCM 20966 / LMG 6465 / NBRC 14845 / NCIMB 13405 / ORS 571).